The chain runs to 311 residues: Pyrimidine-specific ribonucleoside hydrolase RihA (311 aa).

Histidine 240 is an active-site residue.

The protein belongs to the IUNH family. RihA subfamily.

Functionally, hydrolyzes cytidine or uridine to ribose and cytosine or uracil, respectively. This Klebsiella pneumoniae subsp. pneumoniae (strain ATCC 700721 / MGH 78578) protein is Pyrimidine-specific ribonucleoside hydrolase RihA.